Consider the following 372-residue polypeptide: Probable inactive receptor-like protein kinase At1g65250 (372 aa).

ATP is bound by residues 1-4 and Lys-38; that span reads MGWL. The 314-residue stretch at 1–314 folds into the Protein kinase domain; that stretch reads MGWLRKKKKP…QERCQMKAFL (314 aa). Tyr-128 and Tyr-221 each carry phosphotyrosine. The disordered stretch occupies residues 348 to 372; the sequence is SSSLSSGQTQLDSAQDISSTVVLSN. A compositionally biased stretch (polar residues) spans 354–372; that stretch reads GQTQLDSAQDISSTVVLSN.

The protein belongs to the protein kinase superfamily.

This chain is Probable inactive receptor-like protein kinase At1g65250, found in Arabidopsis thaliana (Mouse-ear cress).